A 525-amino-acid chain; its full sequence is GMP synthase [glutamine-hydrolyzing] (525 aa).

Positions 9–207 (RILILDFGSQ…VLGICGCEAL (199 aa)) constitute a Glutamine amidotransferase type-1 domain. The active-site Nucleophile is cysteine 86. Catalysis depends on residues histidine 181 and glutamate 183. The GMPS ATP-PPase domain occupies 208 to 400 (WTSATIIEDA…LGLPYDMLYR (193 aa)). 235–241 (SGGVDSS) is an ATP binding site.

Homodimer.

The catalysed reaction is XMP + L-glutamine + ATP + H2O = GMP + L-glutamate + AMP + diphosphate + 2 H(+). It functions in the pathway purine metabolism; GMP biosynthesis; GMP from XMP (L-Gln route): step 1/1. Its function is as follows. Catalyzes the synthesis of GMP from XMP. The polypeptide is GMP synthase [glutamine-hydrolyzing] (Yersinia pestis bv. Antiqua (strain Antiqua)).